A 317-amino-acid chain; its full sequence is Apolipoprotein E (317 aa).

An N-terminal signal peptide occupies residues 1-18 (MRVLWVALVVTLLAGCRT). Repeat copies occupy residues 79-100 (ELIEESMKEVKAYREELEAQLG), 101-122 (PVTQETQARLSKELQAAQARVG), 123-144 (ADMEDVRNRLVLYRSEVHNMLG), 145-166 (QTTEELRSRLASHLRNVRKRLV), 167-188 (RDTEDLQKRLAVYQAGLREGAE), 189-210 (RSVSALRERLGPLVEQGRLRAA), 211-232 (TLSTRAGQPLRERAEAWGQKLR), and 233-254 (GRLEEMGSRTRDRLDEMRDELE). The 8 X 22 AA approximate tandem repeats stretch occupies residues 79-254 (ELIEESMKEV…RLDEMRDELE (176 aa)). The residue at position 142 (M142) is a Methionine sulfoxide. The interval 157–167 (HLRNVRKRLVR) is LDL and other lipoprotein receptors binding. 161-164 (VRKR) contributes to the heparin binding site. Residues 209–289 (AATLSTRAGQ…GWFEPLVEDM (81 aa)) are lipid-binding and lipoprotein association. 228–235 (GQKLRGRL) is a heparin binding site. The segment at 265–317 (SQLRLQAEAFQARLKGWFEPLVEDMRRQWAGLVERMQSAVSISSSTSAPSDNQ) is homooligomerization. A specificity for association with VLDL region spans residues 277–289 (RLKGWFEPLVEDM).

The protein belongs to the apolipoprotein A1/A4/E family. Homotetramer. May interact with ABCA1; functionally associated with ABCA1 in the biogenesis of HDLs. May interact with APP/A4 amyloid-beta peptide; the interaction is extremely stable in vitro but its physiological significance is unclear. May interact with MAPT. May interact with MAP2. In the cerebrospinal fluid, interacts with secreted SORL1. Interacts with PMEL; this allows the loading of PMEL luminal fragment on ILVs to induce fibril nucleation. Post-translationally, APOE exists as multiple glycosylated and sialylated glycoforms within cells and in plasma. The extent of glycosylation and sialylation are tissue and context specific. In terms of processing, glycated in plasma VLDL. Phosphorylated by FAM20C in the extracellular medium.

Its subcellular location is the secreted. It localises to the extracellular space. The protein localises to the extracellular matrix. It is found in the extracellular vesicle. The protein resides in the endosome. Its subcellular location is the multivesicular body. In terms of biological role, APOE is an apolipoprotein, a protein associating with lipid particles, that mainly functions in lipoprotein-mediated lipid transport between organs via the plasma and interstitial fluids. APOE is a core component of plasma lipoproteins and is involved in their production, conversion and clearance. Apolipoproteins are amphipathic molecules that interact both with lipids of the lipoprotein particle core and the aqueous environment of the plasma. As such, APOE associates with chylomicrons, chylomicron remnants, very low density lipoproteins (VLDL) and intermediate density lipoproteins (IDL) but shows a preferential binding to high-density lipoproteins (HDL). It also binds a wide range of cellular receptors including the LDL receptor/LDLR and the very low-density lipoprotein receptor/VLDLR that mediate the cellular uptake of the APOE-containing lipoprotein particles. Finally, APOE also has a heparin-binding activity and binds heparan-sulfate proteoglycans on the surface of cells, a property that supports the capture and the receptor-mediated uptake of APOE-containing lipoproteins by cells. This Sus scrofa (Pig) protein is Apolipoprotein E (APOE).